The following is a 242-amino-acid chain: Lactate utilization protein A 1 (242 aa).

It belongs to the LutA/YkgE family.

Functionally, is involved in L-lactate degradation and allows cells to grow with lactate as the sole carbon source. This chain is Lactate utilization protein A 1, found in Bacillus anthracis (strain CDC 684 / NRRL 3495).